Consider the following 196-residue polypeptide: Imidazoleglycerol-phosphate dehydratase (196 aa).

The protein belongs to the imidazoleglycerol-phosphate dehydratase family.

The protein resides in the cytoplasm. The enzyme catalyses D-erythro-1-(imidazol-4-yl)glycerol 3-phosphate = 3-(imidazol-4-yl)-2-oxopropyl phosphate + H2O. The protein operates within amino-acid biosynthesis; L-histidine biosynthesis; L-histidine from 5-phospho-alpha-D-ribose 1-diphosphate: step 6/9. The protein is Imidazoleglycerol-phosphate dehydratase of Desulforudis audaxviator (strain MP104C).